We begin with the raw amino-acid sequence, 360 residues long: Chorismate synthase (360 aa).

Arginine 48 and arginine 54 together coordinate NADP(+). Residues 125 to 127 (RSS), 246 to 247 (NA), glycine 286, 301 to 305 (KPTSS), and arginine 327 each bind FMN.

Belongs to the chorismate synthase family. In terms of assembly, homotetramer. It depends on FMNH2 as a cofactor.

The catalysed reaction is 5-O-(1-carboxyvinyl)-3-phosphoshikimate = chorismate + phosphate. The protein operates within metabolic intermediate biosynthesis; chorismate biosynthesis; chorismate from D-erythrose 4-phosphate and phosphoenolpyruvate: step 7/7. In terms of biological role, catalyzes the anti-1,4-elimination of the C-3 phosphate and the C-6 proR hydrogen from 5-enolpyruvylshikimate-3-phosphate (EPSP) to yield chorismate, which is the branch point compound that serves as the starting substrate for the three terminal pathways of aromatic amino acid biosynthesis. This reaction introduces a second double bond into the aromatic ring system. The chain is Chorismate synthase from Actinobacillus pleuropneumoniae serotype 5b (strain L20).